Reading from the N-terminus, the 267-residue chain is 2-keto-3-deoxy-L-rhamnonate aldolase (267 aa).

His-49 acts as the Proton acceptor in catalysis. Residue Gln-151 coordinates substrate. Position 153 (Glu-153) interacts with Mg(2+). Residues Ala-178 and Asp-179 each coordinate substrate. Asp-179 provides a ligand contact to Mg(2+).

It belongs to the HpcH/HpaI aldolase family. KDR aldolase subfamily. As to quaternary structure, homohexamer. Requires Mg(2+) as cofactor.

The catalysed reaction is 2-dehydro-3-deoxy-L-rhamnonate = (S)-lactaldehyde + pyruvate. Catalyzes the reversible retro-aldol cleavage of 2-keto-3-deoxy-L-rhamnonate (KDR) to pyruvate and lactaldehyde. The chain is 2-keto-3-deoxy-L-rhamnonate aldolase from Salmonella dublin (strain CT_02021853).